Consider the following 806-residue polypeptide: MASGADSKGDDLSTAILKQKNRPNRLIVDEAINEDNSVVSLSQPKMDELQLFRGDTVLLKGKKRREAVCIVLSDDTCSDEKIRMNRVVRNNLRVRLGDVISIQPCPDVKYGKRIHVLPIDDTVEGITGNLFEVYLKPYFLEAYRPIRKGDIFLVRGGMRAVEFKVVETDPSPYCIVAPDTVIHCEGEPIKREDEEESLNEVGYDDIGGCRKQLAQIKEMVELPLRHPALFKAIGVKPPRGILLYGPPGTGKTLIARAVANETGAFFFLINGPEIMSKLAGESESNLRKAFEEAEKNAPAIIFIDELDAIAPKREKTHGEVERRIVSQLLTLMDGLKQRAHVIVMAATNRPNSIDPALRRFGRFDREVDIGIPDATGRLEILQIHTKNMKLADDVDLEQVANETHGHVGADLAALCSEAALQAIRKKMDLIDLEDETIDAEVMNSLAVTMDDFRWALSQSNPSALRETVVEVPQVTWEDIGGLEDVKRELQELVQYPVEHPDKFLKFGMTPSKGVLFYGPPGCGKTLLAKAIANECQANFISIKGPELLTMWFGESEANVREIFDKARQAAPCVLFFDELDSIAKARGGNIGDGGGAADRVINQILTEMDGMSTKKNVFIIGATNRPDIIDPAILRPGRLDQLIYIPLPDEKSRVAILKANLRKSPVAKDVDLEFLAKMTNGFSGADLTEICQRACKLAIRESIESEIRRERERQTNPSAMEVEEDDPVPEIRRDHFEEAMRFARRSVSDNDIRKYEMFAQTLQQSRGFGSFRFPSGNQGGAGPSQGSGGGTGGSVYTEDNDDDLYG.

The residue at position 2 (Ala-2) is an N-acetylalanine. Residues Ser-3 and Ser-7 each carry the phosphoserine modification. A Glycyl lysine isopeptide (Lys-Gly) (interchain with G-Cter in SUMO2) cross-link involves residue Lys-8. Phosphoserine is present on Ser-13. Lys-18 participates in a covalent cross-link: Glycyl lysine isopeptide (Lys-Gly) (interchain with G-Cter in SUMO2). Ser-37 is modified (phosphoserine). 247 to 253 (PGTGKTL) provides a ligand contact to ATP. At Lys-315 the chain carries N6,N6,N6-trimethyllysine; by VCPKMT. ATP is bound by residues Asn-348 and His-384. Thr-436 bears the Phosphothreonine mark. Ser-462 bears the Phosphoserine mark. Lys-502 and Lys-505 each carry N6-acetyllysine. 521 to 526 (GCGKTL) serves as a coordination point for ATP. Position 668 is an N6-acetyllysine; alternate (Lys-668). N6-succinyllysine; alternate is present on Lys-668. At Ser-702 the chain carries Phosphoserine. The segment at 708-727 (RRERERQTNPSAMEVEEDDP) is disordered. At Lys-754 the chain carries N6-acetyllysine. Residues 768-806 (FGSFRFPSGNQGGAGPSQGSGGGTGGSVYTEDNDDDLYG) form a disordered region. 3 positions are modified to phosphoserine: Ser-770, Ser-775, and Ser-787. A compositionally biased stretch (gly residues) spans 777–793 (NQGGAGPSQGSGGGTGG). The interval 797-806 (TEDNDDDLYG) is interaction with UBXN6. The PIM motif signature appears at 802–806 (DDLYG). Tyr-805 carries the post-translational modification Phosphotyrosine.

It belongs to the AAA ATPase family. Homohexamer. Forms a ring-shaped particle of 12.5 nm diameter, that displays 6-fold radial symmetry. Part of a ternary complex containing STX5A, NSFL1C and VCP. NSFL1C forms a homotrimer that binds to one end of a VCP homohexamer. The complex binds to membranes enriched in phosphatidylethanolamine-containing lipids and promotes Golgi membrane fusion. Binds to a heterodimer of NPLOC4 and UFD1, binding to this heterodimer inhibits Golgi-membrane fusion. Interaction with VCIP135 leads to dissociation of the complex via ATP hydrolysis by VCP. Part of a ternary complex containing NPLOC4, UFD1 and VCP. Interacts with NSFL1C-like protein p37; the complex has membrane fusion activity and is required for Golgi and endoplasmic reticulum biogenesis. Interacts with SELENOS and SYVN1, as well as with DERL1 (via SHP-box motif), DERL2 and DERL3; which probably transfer misfolded proteins from the ER to VCP. Interacts with SVIP and forms a complex with SVIP and DERL1. Component of a complex required to couple retrotranslocation, ubiquitination and deglycosylation composed of NGLY1, SAKS1, AMFR, VCP and RAD23B. Part of a complex composed of STUB1/CHIP, VCP/p97, CHRNA3, and UBXN2A that modulates the ubiquitination and endoplasmic reticulum-associated degradation (ERAD) of CHRNA3. Within the complex UBXN2A acts as a scaffold protein required for the interaction of CHRNA3 with VCP/p97, this interaction also inhibits CHRNA3 ubiquitination by STUB1/CHIP and subsequently ERAD. Interacts with UBXN2A (via UBX domain); the interaction is required for the interaction of CHRNA3 in the STUB1-VCP-UBXN2A complex. Directly interacts with UBXN4 and RNF19A. Interacts with CASR. Interacts with UBE4B and YOD1. Interacts with clathrin. Interacts with RNF103. Interacts with TRIM13 and TRIM21. Component of a VCP/p97-AMFR/gp78 complex that participates in the final step of the endoplasmic reticulum-associated degradation (ERAD) of HMGCR. Interacts directly with AMFR/gp78 (via its VIM). Interacts with RHBDD1 (via C-terminal domain). Interacts with SPRTN; leading to recruitment to stalled replication forks. Interacts with WASHC5. Interacts with UBOX5. Interacts (via N-terminus) with UBXN7, UBXN8, and probably several other UBX domain-containing proteins (via UBX domains); the interactions are mutually exclusive with VIM-dependent interactions such as those with AMFR and SELENOS. Forms a complex with UBQLN1 and UBXN4. Interacts (via the PIM motif) with RNF31 (via the PUB domain). Interacts with RIGI and RNF125; interaction takes place when RIGI is ubiquitinated via 'Lys-63'-linked ubiquitin on its CARD domains, leading to recruit RNF125 and promote ubiquitination and degradation of RIGI. Interacts with BAG6. Interacts with UBXN10. Interacts with UBXN6; the interaction with UBXN6 is direct and competitive with UFD1. Forms a ternary complex with CAV1 and UBXN6. Interacts with PLAA, UBXN6 and YOD1; may form a complex involved in macroautophagy. Interacts with ANKZF1. Interacts with ubiquitin-binding protein FAF1. Interacts with ZFAND2B (via VIM motif); the interaction is direct. Interacts with ZFAND1 (via its ubiquitin-like region); this interaction occurs in an arsenite-dependent manner. Interacts with CCDC47. Interacts with UBAC2. Interacts with LMBR1L. Interacts with ATXN3. Interacts with TEX264; bridging VCP to covalent DNA-protein cross-links (DPCs). Interacts with FBXL4. In terms of processing, phosphorylated by tyrosine kinases in response to T-cell antigen receptor activation. Phosphorylated in mitotic cells. Post-translationally, ISGylated. Methylation at Lys-315 catalyzed by VCPKMT is increased in the presence of ASPSCR1. Lys-315 methylation may decrease ATPase activity.

It localises to the cytoplasm. It is found in the cytosol. The protein resides in the endoplasmic reticulum. The protein localises to the nucleus. Its subcellular location is the stress granule. The catalysed reaction is ATP + H2O = ADP + phosphate + H(+). Functionally, necessary for the fragmentation of Golgi stacks during mitosis and for their reassembly after mitosis. Involved in the formation of the transitional endoplasmic reticulum (tER). The transfer of membranes from the endoplasmic reticulum to the Golgi apparatus occurs via 50-70 nm transition vesicles which derive from part-rough, part-smooth transitional elements of the endoplasmic reticulum (tER). Vesicle budding from the tER is an ATP-dependent process. The ternary complex containing UFD1, VCP and NPLOC4 binds ubiquitinated proteins and is necessary for the export of misfolded proteins from the ER to the cytoplasm, where they are degraded by the proteasome. The NPLOC4-UFD1-VCP complex regulates spindle disassembly at the end of mitosis and is necessary for the formation of a closed nuclear envelope. Regulates E3 ubiquitin-protein ligase activity of RNF19A. Component of the VCP/p97-AMFR/gp78 complex that participates in the final step of the sterol-mediated ubiquitination and endoplasmic reticulum-associated degradation (ERAD) of HMGCR. Mediates the endoplasmic reticulum-associated degradation of CHRNA3 in cortical neurons as part of the STUB1-VCP-UBXN2A complex. Involved in endoplasmic reticulum stress-induced pre-emptive quality control, a mechanism that selectively attenuates the translocation of newly synthesized proteins into the endoplasmic reticulum and reroutes them to the cytosol for proteasomal degradation. Involved in clearance process by mediating G3BP1 extraction from stress granules. Also involved in DNA damage response: recruited to double-strand breaks (DSBs) sites in a RNF8- and RNF168-dependent manner and promotes the recruitment of TP53BP1 at DNA damage sites. Recruited to stalled replication forks by SPRTN: may act by mediating extraction of DNA polymerase eta (POLH) to prevent excessive translesion DNA synthesis and limit the incidence of mutations induced by DNA damage. Together with SPRTN metalloprotease, involved in the repair of covalent DNA-protein cross-links (DPCs) during DNA synthesis. Involved in interstrand cross-link repair in response to replication stress by mediating unloading of the ubiquitinated CMG helicase complex. Mediates extraction of PARP1 trapped to chromatin: recognizes and binds ubiquitinated PARP1 and promotes its removal. Required for cytoplasmic retrotranslocation of stressed/damaged mitochondrial outer-membrane proteins and their subsequent proteasomal degradation. Essential for the maturation of ubiquitin-containing autophagosomes and the clearance of ubiquitinated protein by autophagy. Acts as a negative regulator of type I interferon production by interacting with RIGI: interaction takes place when RIGI is ubiquitinated via 'Lys-63'-linked ubiquitin on its CARD domains, leading to recruit RNF125 and promote ubiquitination and degradation of RIGI. May play a role in the ubiquitin-dependent sorting of membrane proteins to lysosomes where they undergo degradation. May more particularly play a role in caveolins sorting in cells. By controlling the steady-state expression of the IGF1R receptor, indirectly regulates the insulin-like growth factor receptor signaling pathway. The polypeptide is Transitional endoplasmic reticulum ATPase (VCP) (Homo sapiens (Human)).